The sequence spans 201 residues: Holliday junction branch migration complex subunit RuvA (201 aa).

A domain I region spans residues 1-63 (MISHFSGTVS…EESLTLYGFV (63 aa)). The interval 64–142 (EADDRDAFEL…ALAPRGASAS (79 aa)) is domain II. Residues 143–153 (GATHVAAPWRE) form a flexible linker region. A domain III region spans residues 153 to 201 (EQVAEGLVGLGWSTKDAEKAVDKVVALKEADPAMSIGNLMRAALRSLAR).

It belongs to the RuvA family. In terms of assembly, homotetramer. Forms an RuvA(8)-RuvB(12)-Holliday junction (HJ) complex. HJ DNA is sandwiched between 2 RuvA tetramers; dsDNA enters through RuvA and exits via RuvB. An RuvB hexamer assembles on each DNA strand where it exits the tetramer. Each RuvB hexamer is contacted by two RuvA subunits (via domain III) on 2 adjacent RuvB subunits; this complex drives branch migration. In the full resolvosome a probable DNA-RuvA(4)-RuvB(12)-RuvC(2) complex forms which resolves the HJ.

The protein resides in the cytoplasm. The RuvA-RuvB-RuvC complex processes Holliday junction (HJ) DNA during genetic recombination and DNA repair, while the RuvA-RuvB complex plays an important role in the rescue of blocked DNA replication forks via replication fork reversal (RFR). RuvA specifically binds to HJ cruciform DNA, conferring on it an open structure. The RuvB hexamer acts as an ATP-dependent pump, pulling dsDNA into and through the RuvAB complex. HJ branch migration allows RuvC to scan DNA until it finds its consensus sequence, where it cleaves and resolves the cruciform DNA. The protein is Holliday junction branch migration complex subunit RuvA of Cutibacterium acnes (strain DSM 16379 / KPA171202) (Propionibacterium acnes).